The sequence spans 457 residues: Argininosuccinate lyase (457 aa).

The protein belongs to the lyase 1 family. Argininosuccinate lyase subfamily.

The protein localises to the cytoplasm. The catalysed reaction is 2-(N(omega)-L-arginino)succinate = fumarate + L-arginine. The protein operates within amino-acid biosynthesis; L-arginine biosynthesis; L-arginine from L-ornithine and carbamoyl phosphate: step 3/3. In Pasteurella multocida (strain Pm70), this protein is Argininosuccinate lyase.